Reading from the N-terminus, the 377-residue chain is Probable G-protein coupled receptor 27 (377 aa).

The Extracellular segment spans residues 1–24 (MANASEPGGGGGGAEAAALGLRLA). Asparagine 3 carries N-linked (GlcNAc...) asparagine glycosylation. The chain crosses the membrane as a helical span at residues 25–45 (TLSLLLCVSLAGNVLFALLIV). At 46 to 56 (RERSLHRAPYY) the chain is on the cytoplasmic side. Residues 57–77 (LLLDLCLADGLRALACLPAVM) traverse the membrane as a helical segment. At 78–98 (LAARRAAAAAGTPPGALGCKL) the chain is on the extracellular side. Cysteine 96 and cysteine 173 form a disulfide bridge. Residues 99-119 (LAFLAALFCFHAAFLLLGVGV) traverse the membrane as a helical segment. Residues 120–140 (TRYLAIAHHRFYAERLAGWPC) lie on the Cytoplasmic side of the membrane. The helical transmembrane segment at 141 to 161 (AAMLVCAAWALALAAAFPPVL) threads the bilayer. Residues 162–183 (DGGGADDEDAPCALEQRPDGAP) are Extracellular-facing. Residues 184–204 (GALGFLLLLAAVVGATHLVYL) form a helical membrane-spanning segment. At 205-287 (RLLFFIHDRR…FKTEKRLCKM (83 aa)) the chain is on the cytoplasmic side. Residues 288 to 308 (FYAITLLFLLLWGPYVVASYL) form a helical membrane-spanning segment. Topologically, residues 309–322 (RVLVRPGAVPQAYL) are extracellular. A helical membrane pass occupies residues 323-343 (TASVWLTFAQAGINPVVCFLF). Over 344-377 (NRELRDCFRAQFPCCQSPQATQATLPCDLKGIGL) the chain is Cytoplasmic.

The protein belongs to the G-protein coupled receptor 1 family. In terms of tissue distribution, expressed as a 3.0 kb transcript, in whole brain, hippocampus, striatum, frontal cortex, thalamus, pons and hypothalamus. A lower molecular weight transcript was detected in all regions examined, except the hypothalamus.

The protein localises to the cell membrane. In terms of biological role, orphan receptor. Possible candidate for amine-like G-protein coupled receptor. The sequence is that of Probable G-protein coupled receptor 27 (Gpr27) from Rattus norvegicus (Rat).